The sequence spans 543 residues: Chaperonin GroEL 1 (543 aa).

ATP-binding positions include 30 to 33 (TLGP), K51, 87 to 91 (DGTTT), G415, and D496.

This sequence belongs to the chaperonin (HSP60) family. Forms a cylinder of 14 subunits composed of two heptameric rings stacked back-to-back. Interacts with the co-chaperonin GroES.

It is found in the cytoplasm. It carries out the reaction ATP + H2O + a folded polypeptide = ADP + phosphate + an unfolded polypeptide.. Its function is as follows. Together with its co-chaperonin GroES, plays an essential role in assisting protein folding. The GroEL-GroES system forms a nano-cage that allows encapsulation of the non-native substrate proteins and provides a physical environment optimized to promote and accelerate protein folding. The protein is Chaperonin GroEL 1 of Roseobacter denitrificans (strain ATCC 33942 / OCh 114) (Erythrobacter sp. (strain OCh 114)).